The primary structure comprises 116 residues: Putative iron-sulfur cluster insertion protein ErpA (116 aa).

Positions 44, 108, and 110 each coordinate iron-sulfur cluster.

Belongs to the HesB/IscA family. As to quaternary structure, homodimer. It depends on iron-sulfur cluster as a cofactor.

Its function is as follows. Required for insertion of 4Fe-4S clusters. The sequence is that of Putative iron-sulfur cluster insertion protein ErpA from Janthinobacterium sp. (strain Marseille) (Minibacterium massiliensis).